The following is a 199-amino-acid chain: Small ribosomal subunit protein uS7 (199 aa).

The protein belongs to the universal ribosomal protein uS7 family. As to quaternary structure, part of the 30S ribosomal subunit.

One of the primary rRNA binding proteins, it binds directly to 16S rRNA where it nucleates assembly of the head domain of the 30S subunit. Is located at the subunit interface close to the decoding center. The sequence is that of Small ribosomal subunit protein uS7 from Cenarchaeum symbiosum (strain A).